A 356-amino-acid chain; its full sequence is tRNA N6-adenosine threonylcarbamoyltransferase (356 aa).

Fe cation is bound by residues His115 and His119. Substrate-binding positions include Leu137–Gly141, Asp170, Gly183, and Asn280. A Fe cation-binding site is contributed by Asp308.

It belongs to the KAE1 / TsaD family. Fe(2+) serves as cofactor.

It localises to the cytoplasm. It catalyses the reaction L-threonylcarbamoyladenylate + adenosine(37) in tRNA = N(6)-L-threonylcarbamoyladenosine(37) in tRNA + AMP + H(+). Its function is as follows. Required for the formation of a threonylcarbamoyl group on adenosine at position 37 (t(6)A37) in tRNAs that read codons beginning with adenine. Is involved in the transfer of the threonylcarbamoyl moiety of threonylcarbamoyl-AMP (TC-AMP) to the N6 group of A37, together with TsaE and TsaB. TsaD likely plays a direct catalytic role in this reaction. In Paracoccus denitrificans (strain Pd 1222), this protein is tRNA N6-adenosine threonylcarbamoyltransferase.